The following is a 388-amino-acid chain: Xylose isomerase (388 aa).

Residues His54 and Asp57 contribute to the active site. 7 residues coordinate Mg(2+): Glu181, Glu217, His220, Asp245, Asp255, Asp257, and Asp287.

The protein belongs to the xylose isomerase family. In terms of assembly, homotetramer. Requires Mg(2+) as cofactor.

Its subcellular location is the cytoplasm. The catalysed reaction is alpha-D-xylose = alpha-D-xylulofuranose. This Streptomyces thermocyaneoviolaceus protein is Xylose isomerase.